Reading from the N-terminus, the 493-residue chain is Farnesoate epoxidase (493 aa).

An N-terminal signal peptide occupies residues 1–24 (MLALIVLCFILFFYIISRRHRGLC). Position 433 (Cys433) interacts with heme.

Belongs to the cytochrome P450 family. Requires heme as cofactor. Constitutively expressed in corpora allata from the first instar larval to adult stages.

It catalyses the reaction (2E,6E)-farnesoate + reduced [NADPH--hemoprotein reductase] + O2 = juvenile hormone III carboxylate + oxidized [NADPH--hemoprotein reductase] + H2O + H(+). Its function is as follows. Catalyzes the conversion of farnesoate to juvenile hormone III acid in juvenile hormone biosynthesis. In Bombyx mori (Silk moth), this protein is Farnesoate epoxidase.